The primary structure comprises 161 residues: Nucleoside diphosphate kinase (161 aa).

K13, F61, R89, T95, R106, and N116 together coordinate ATP. Residue H119 is the Pros-phosphohistidine intermediate of the active site.

The protein belongs to the NDK family. Mg(2+) serves as cofactor.

Its subcellular location is the cytoplasm. The catalysed reaction is a 2'-deoxyribonucleoside 5'-diphosphate + ATP = a 2'-deoxyribonucleoside 5'-triphosphate + ADP. It catalyses the reaction a ribonucleoside 5'-diphosphate + ATP = a ribonucleoside 5'-triphosphate + ADP. In terms of biological role, major role in the synthesis of nucleoside triphosphates other than ATP. The ATP gamma phosphate is transferred to the NDP beta phosphate via a ping-pong mechanism, using a phosphorylated active-site intermediate. The sequence is that of Nucleoside diphosphate kinase from Halobacterium salinarum (strain ATCC 29341 / DSM 671 / R1).